The primary structure comprises 279 residues: Acetylglutamate kinase (279 aa).

Substrate is bound by residues 64 to 65 (GG), Arg86, and Asn177.

This sequence belongs to the acetylglutamate kinase family. ArgB subfamily.

The protein resides in the cytoplasm. It catalyses the reaction N-acetyl-L-glutamate + ATP = N-acetyl-L-glutamyl 5-phosphate + ADP. It functions in the pathway amino-acid biosynthesis; L-arginine biosynthesis; N(2)-acetyl-L-ornithine from L-glutamate: step 2/4. Catalyzes the ATP-dependent phosphorylation of N-acetyl-L-glutamate. The protein is Acetylglutamate kinase of Campylobacter jejuni (strain RM1221).